Reading from the N-terminus, the 291-residue chain is Inhibitory synaptic factor 1 (291 aa).

The interval 1–25 is disordered; it reads MNIRGAPDLGQPSDDPNSGGERERI. A coiled-coil region spans residues 30–63; the sequence is KMVIGQLEGILRELKEVAKELREVVSQIDKLTSD. 2 disordered regions span residues 120–186 and 201–291; these read TPSD…ERVR and EEGD…KGKN. Residues 201–213 show a composition bias toward acidic residues; sequence EEGDGEEVEEEEA. The segment covering 262 to 284 has biased composition (polar residues); that stretch reads RNSSTQTVSDKSTQTVLPYTATK.

This sequence belongs to the INSYN1 family. In terms of assembly, interacts with GPHN.

It is found in the postsynaptic density. In terms of biological role, component of the protein machinery at the inhibitory synapses, probably acting as a scaffold. Inhibitory synapses dampen neuronal activity through postsynaptic hyperpolarization. This synaptic inhibition is fundamental for the functioning of the central nervous system, shaping and orchestrating the flow of information through neuronal networks to generate a precise neural code. This chain is Inhibitory synaptic factor 1 (Insyn1), found in Rattus norvegicus (Rat).